Consider the following 338-residue polypeptide: 3 beta-hydroxysteroid dehydrogenase type 7 (338 aa).

Residue Y159 is the Proton acceptor of the active site. Position 163 (K163) interacts with NAD(+). Transmembrane regions (helical) follow at residues 258 to 278 and 280 to 300; these read LLPY…QWLL and PLVL…NTTF.

It belongs to the 3-beta-HSD family. High levels in liver and lung, moderate levels in spleen, brain, heart, kidney, jejunum and testis. Up-regulated in 3Y1 cells upon growth arrest.

It is found in the endoplasmic reticulum membrane. It carries out the reaction 7alpha-hydroxycholesterol + NAD(+) = 7alpha-hydroxycholest-4-en-3-one + NADH + H(+). The catalysed reaction is 7alpha,25-dihydroxycholesterol + NAD(+) = 7alpha,25-dihydroxy-4-cholesten-3-one + NADH + H(+). The enzyme catalyses (25R)-cholest-5-en-3beta,7alpha,26-triol + NAD(+) = (25R)-7alpha,26-dihydroxycholest-4-en-3-one + NADH + H(+). It catalyses the reaction (24S)-7alpha-dihydroxycholesterol + NAD(+) = (24S)-7alpha,24-dihydroxycholest-4-en-3-one + NADH + H(+). Its pathway is lipid metabolism; steroid biosynthesis. Functionally, the 3-beta-HSD enzymatic system plays a crucial role in the biosynthesis of all classes of hormonal steroids. HSD VII is active against four 7-alpha-hydroxylated sterols. Does not metabolize several different C(19/21) steroids as substrates. Involved in bile acid synthesis. Plays a key role in cell positioning and movement in lymphoid tissues by mediating degradation of 7-alpha,25-dihydroxycholesterol (7-alpha,25-OHC): 7-alpha,25-OHC acts as a ligand for the G protein-coupled receptor GPR183/EBI2, a chemotactic receptor for a number of lymphoid cells. The sequence is that of 3 beta-hydroxysteroid dehydrogenase type 7 from Rattus norvegicus (Rat).